The following is a 222-amino-acid chain: Interleukin-12 subunit alpha (222 aa).

The signal sequence occupies residues 1–25; that stretch reads MCPLRSLFLMATLVFLNHLDHLSLA. 3 cysteine pairs are disulfide-bonded: Cys-40–Cys-113, Cys-67–Cys-199, and Cys-88–Cys-126. Asn-96 and Asn-174 each carry an N-linked (GlcNAc...) asparagine glycan.

Belongs to the IL-6 superfamily. In terms of assembly, heterodimer with IL12B; disulfide-linked. This heterodimer is known as interleukin IL-12. Heterodimer with EBI3/IL27B; not disulfide-linked. This heterodimer is known as interleukin IL-35. Interacts with NBR1; this interaction promotes IL-12 secretion.

It is found in the secreted. Its function is as follows. Heterodimerizes with IL12B to form the IL-12 cytokine or with EBI3/IL27B to form the IL-35 cytokine. IL-12 is primarily produced by professional antigen-presenting cells (APCs) such as B-cells and dendritic cells (DCs) as well as macrophages and granulocytes and regulates T-cell and natural killer-cell responses, induces the production of interferon-gamma (IFN-gamma), favors the differentiation of T-helper 1 (Th1) cells and is an important link between innate resistance and adaptive immunity. Mechanistically, exerts its biological effects through a receptor composed of IL12R1 and IL12R2 subunits. Binding to the receptor results in the rapid tyrosine phosphorylation of a number of cellular substrates including the JAK family kinases TYK2 and JAK2. In turn, recruited STAT4 gets phosphorylated and translocates to the nucleus where it regulates cytokine/growth factor responsive genes. As part of IL-35, plays essential roles in maintaining the immune homeostasis of the liver microenvironment and also functions as an immune-suppressive cytokine. Mediates biological events through unconventional receptors composed of IL12RB2 and gp130/IL6ST heterodimers or homodimers. Signaling requires the transcription factors STAT1 and STAT4, which form a unique heterodimer that binds to distinct DNA sites. This chain is Interleukin-12 subunit alpha (IL12A), found in Lama glama (Llama).